We begin with the raw amino-acid sequence, 450 residues long: ATP-dependent protease ATPase subunit HslU (450 aa).

Residues I18 and 60–65 (GVGKTE) contribute to the ATP site. Residues 140–151 (KTSSSGWAQQQE) are compositionally biased toward polar residues. A disordered region spans residues 140 to 162 (KTSSSGWAQQQEETPENDDQRGT). 3 residues coordinate ATP: D263, E328, and R400.

The protein belongs to the ClpX chaperone family. HslU subfamily. A double ring-shaped homohexamer of HslV is capped on each side by a ring-shaped HslU homohexamer. The assembly of the HslU/HslV complex is dependent on binding of ATP.

It is found in the cytoplasm. ATPase subunit of a proteasome-like degradation complex; this subunit has chaperone activity. The binding of ATP and its subsequent hydrolysis by HslU are essential for unfolding of protein substrates subsequently hydrolyzed by HslV. HslU recognizes the N-terminal part of its protein substrates and unfolds these before they are guided to HslV for hydrolysis. This Idiomarina loihiensis (strain ATCC BAA-735 / DSM 15497 / L2-TR) protein is ATP-dependent protease ATPase subunit HslU.